We begin with the raw amino-acid sequence, 427 residues long: Septin-6 (427 aa).

An N-acetylalanine modification is found at Ala2. Phosphoserine is present on Ser27. The Septin-type G domain occupies 39-305 (QGFCFNILCV…ELYRRCKLEE (267 aa)). The tract at residues 49 to 56 (GETGLGKS) is G1 motif. Residues 49–56 (GETGLGKS), Gly104, 185–193 (KSDAISKSE), Gly239, and Arg254 contribute to the GTP site. Positions 101–104 (STVG) are G3 motif. The tract at residues 184–187 (AKSD) is G4 motif. Residues 321–416 (QETYEAKRNE…QSQGSQAGGS (96 aa)) adopt a coiled-coil conformation. Lys367 is modified (N6-acetyllysine). The tract at residues 405–427 (LLQSQGSQAGGSQTLKRDKEKKN) is disordered. A compositionally biased stretch (low complexity) spans 407–417 (QSQGSQAGGSQ). Ser416 carries the phosphoserine modification. Thr418 bears the Phosphothreonine mark.

The protein belongs to the TRAFAC class TrmE-Era-EngA-EngB-Septin-like GTPase superfamily. Septin GTPase family. Septins polymerize into heterooligomeric protein complexes that form filaments, and associate with cellular membranes, actin filaments and microtubules. GTPase activity is required for filament formation. Filaments are assembled from asymmetrical heterotrimers, composed of SEPTIN2, SEPTIN6 and SEPTIN7 that associate head-to-head to form a hexameric unit. Within the trimer, directly interacts with SEPTIN2 and SEPTIN7. Also interacts with SEPTIN9 and SEPTIN12. Interaction with SEPTIN12 alters filament structure. Component of a septin core octameric complex consisting of SEPTIN12, SEPTIN7, SEPTIN6 and SEPTIN2 or SEPTIN4 in the order 12-7-6-2-2-6-7-12 or 12-7-6-4-4-6-7-12 and located in the sperm annulus. Interacts with SOCS7. Interacts with HNRNPA1.

The protein localises to the cytoplasm. The protein resides in the cytoskeleton. It is found in the spindle. Its subcellular location is the chromosome. It localises to the centromere. The protein localises to the kinetochore. The protein resides in the cleavage furrow. It is found in the midbody. Its subcellular location is the cell projection. It localises to the cilium. The protein localises to the flagellum. Its function is as follows. Filament-forming cytoskeletal GTPase. Required for normal organization of the actin cytoskeleton. Involved in cytokinesis. Forms a filamentous structure with SEPTIN12, SEPTIN6, SEPTIN2 and probably SEPTIN4 at the sperm annulus which is required for the structural integrity and motility of the sperm tail during postmeiotic differentiation. This chain is Septin-6, found in Bos taurus (Bovine).